Reading from the N-terminus, the 454-residue chain is F-box protein At1g67130 (454 aa).

Residues 4 to 53 (GETLDSIPTDLILDILSRLPTKSIARFHCVSKLWSSMLASQDFTRLFVNR) enclose the F-box domain.

This Arabidopsis thaliana (Mouse-ear cress) protein is F-box protein At1g67130.